The chain runs to 1603 residues: Gag-Pol polyprotein (1603 aa).

The span at 124-141 (KGEEVGETTAQRDAKMAP) shows a compositional bias: basic and acidic residues. Positions 124–144 (KGEEVGETTAQRDAKMAPEKM) are disordered. Positions 172 to 175 (PPPY) match the PPXY motif motif. Positions 180–184 (LYPSL) match the LYPX(n)L motif motif. A Nuclear export signal motif is present at residues 219–229 (LTDWARIREEL). 2 CCHC-type zinc fingers span residues 507 to 524 (GLCY…QCPK) and 533 to 550 (ERCQ…QCRR). Positions 544–571 (NAKQCRRRDGNQGQRPGKGLSSGSWPVS) are disordered. In terms of domain architecture, Peptidase A2 spans 609–690 (ITALLDSGAD…VRGSILGRDC (82 aa)). The active-site For protease activity; shared with dimeric partner is the aspartate 614. A Reverse transcriptase domain is found at 750–938 (LQLGHIEPSL…PGVQYLGYKL (189 aa)). Residues aspartate 815, aspartate 890, aspartate 891, aspartate 1158, glutamate 1192, aspartate 1213, and aspartate 1272 each contribute to the Mg(2+) site. Residues 1149–1280 (PVPGPTAFTD…ADSQATFQAY (132 aa)) form the RNase H type-1 domain. The Integrase-type zinc finger occupies 1280 to 1321 (YPLREAKDLHTALHIGPRALSKACNISMQQAREVVQTCPHCN). Residues histidine 1289, histidine 1293, cysteine 1317, and cysteine 1320 each contribute to the Zn(2+) site. Residues 1333 to 1496 (RGLGPLQIWQ…TPIQKHWRPT (164 aa)) enclose the Integrase catalytic domain. Positions 1344, 1401, and 1437 each coordinate Mg(2+). A DNA-binding region (integrase-type) is located at residues 1502 to 1550 (PPVKIRIETGEWEKGWNVLVWGRGYAAVKNRDTDKVIWVPSRKVKPDVT). The segment at 1548–1567 (DVTQKDEVTKKDEASPLFAG) is involved in homooctamerization. The disordered stretch occupies residues 1566 to 1603 (AGISDWIPWEDEQEGLQGETASNKQERPGEDTLAANES).

In terms of assembly, active as a homodimer. Homodimer. Homomultimer. Homohexamer. As to quaternary structure, homodimer; further associates as a homooctamer. In terms of assembly, heterodimer of alpha and beta subunits. Three forms of RT exist: alpha-alpha (alpha-Pol), beta-beta (beta-Pol), and alpha-beta, with the major form being the heterodimer. Both the polymerase and RNase H active sites are located in the alpha subunit of heterodimeric RT alpha-beta. Mg(2+) serves as cofactor. The cofactor is Mn(2+). In terms of processing, specific enzymatic cleavages in vivo yield mature proteins. Post-translationally, capsid protein p27: The cleavage at the C-terminus is slowly trimmed by the viral protease, sometimes being cut internally thereby generating the short version of the capsid protein and a capsid protein C-terminally extended by 3 amino acids in a ratio of 2:1.

Its subcellular location is the virion. The enzyme catalyses DNA(n) + a 2'-deoxyribonucleoside 5'-triphosphate = DNA(n+1) + diphosphate. It carries out the reaction Endonucleolytic cleavage to 5'-phosphomonoester.. Its function is as follows. Capsid protein p27: Self-associates to form the irregular polyhedron core composed of hexamers and pentamers, that encapsulates the genomic RNA-nucleocapsid complex. Assembles as a tube in vitro. Binds to inositol hexakisphosphate (IP6), which allows the assembly of the polyhedral capsid. Functionally, spacer peptide: Plays a role in the oligomerization of the Gag polyprotein and in the stabilization of the immature particle. Essential layering element during tube assembly. Binds strongly to viral nucleic acids and promotes their packaging. Plays a role in the maturation-stabilization of the viral dimeric RNA via highly structured zinc-binding motifs. In terms of biological role, the aspartyl protease that mediates proteolytic cleavages of Gag and Gag-Pol polyproteins during or shortly after the release of the virion from the plasma membrane. Cleavages take place as an ordered, step-wise cascade to yield mature proteins. This process is called maturation. Displays maximal activity during the budding process just prior to particle release from the cell. Its function is as follows. Catalyzes viral DNA integration into the host chromosome, by performing a series of DNA cutting and joining reactions. This recombination event is an essential step in the viral replication cycle. Has a strong preference for using the 3'-OH at the viral DNA end as a nucleophile. In Avian leukosis virus subgroup A (isolate RSA) (ALV-A RSA), this protein is Gag-Pol polyprotein (gag-pol).